The following is a 510-amino-acid chain: Ribonuclease Y (510 aa).

A helical membrane pass occupies residues 2 to 22 (IYIIFSSIFAGFILGFLVRVF). One can recognise a KH domain in the interval 198–258 (TVASVELPND…IRKELAKRTL (61 aa)). Positions 324-419 (VLSHSKETAI…VQIADAISAS (96 aa)) constitute an HD domain.

This sequence belongs to the RNase Y family.

It is found in the cell membrane. Its function is as follows. Endoribonuclease that initiates mRNA decay. This chain is Ribonuclease Y, found in Borrelia garinii subsp. bavariensis (strain ATCC BAA-2496 / DSM 23469 / PBi) (Borreliella bavariensis).